Reading from the N-terminus, the 510-residue chain is GMP synthase [glutamine-hydrolyzing] (510 aa).

In terms of domain architecture, Glutamine amidotransferase type-1 spans 5–195 (PILVVNFGSQ…IYGVCKAEKN (191 aa)). Cysteine 82 (nucleophile) is an active-site residue. Active-site residues include histidine 169 and glutamate 171. Residues 196–385 (WEMGDFIHEK…LGVPEEILRR (190 aa)) form the GMPS ATP-PPase domain. 223–229 (SGGVDST) provides a ligand contact to ATP.

Homodimer.

It catalyses the reaction XMP + L-glutamine + ATP + H2O = GMP + L-glutamate + AMP + diphosphate + 2 H(+). The protein operates within purine metabolism; GMP biosynthesis; GMP from XMP (L-Gln route): step 1/1. Its function is as follows. Catalyzes the synthesis of GMP from XMP. The chain is GMP synthase [glutamine-hydrolyzing] (guaA) from Aquifex aeolicus (strain VF5).